Consider the following 43-residue polypeptide: Structural protein ORF5a (43 aa).

Residues 2–22 form a helical membrane-spanning segment; it reads FSQIGAFLDSALLLLVAFFAV.

The protein belongs to the arteriviridae ORF5a protein family. As to quaternary structure, interacts with proteins GP2B and GP4.

Its subcellular location is the virion. It localises to the host cell membrane. Functionally, minor virion component that plays an essential role in virus infectivity. This is Structural protein ORF5a from Sus scrofa (Pig).